A 187-amino-acid polypeptide reads, in one-letter code: Ribosome maturation factor RimM (187 aa).

Polar residues predominate over residues 1–17; that stretch reads MTSTPSPSTADPNSTND. A disordered region spans residues 1 to 21; the sequence is MTSTPSPSTADPNSTNDWLPV. In terms of domain architecture, PRC barrel spans 111 to 184; it reads EGEFHLLDLV…WLLLTPPPGL (74 aa).

Belongs to the RimM family. Binds ribosomal protein uS19.

Its subcellular location is the cytoplasm. Its function is as follows. An accessory protein needed during the final step in the assembly of 30S ribosomal subunit, possibly for assembly of the head region. Essential for efficient processing of 16S rRNA. May be needed both before and after RbfA during the maturation of 16S rRNA. It has affinity for free ribosomal 30S subunits but not for 70S ribosomes. This chain is Ribosome maturation factor RimM, found in Synechococcus sp. (strain CC9311).